A 935-amino-acid polypeptide reads, in one-letter code: Disintegrin and metalloproteinase domain-containing protein 22 (935 aa).

The first 24 residues, 1–24 (MHINGGPLASWICCVIGSIHLAHA), serve as a signal peptide directing secretion. The propeptide occupies 25–227 (STRPENGGTS…QQTRSQRKKR (203 aa)). 2 N-linked (GlcNAc...) asparagine glycosylation sites follow: asparagine 167 and asparagine 210. Topologically, residues 228-736 (QTRRYPRNVE…NRDEGVISTN (509 aa)) are extracellular. Residues 241 to 440 (KYVELMIVND…GGGACLFNKP (200 aa)) enclose the Peptidase M12B domain. 17 disulfide bridges follow: cysteine 351/cysteine 435, cysteine 394/cysteine 419, cysteine 396/cysteine 403, cysteine 449/cysteine 479, cysteine 460/cysteine 476, cysteine 462/cysteine 468, cysteine 475/cysteine 496, cysteine 487/cysteine 493, cysteine 492/cysteine 518, cysteine 505/cysteine 525, cysteine 512/cysteine 544, cysteine 537/cysteine 549, cysteine 556/cysteine 607, cysteine 571/cysteine 637, cysteine 585/cysteine 595, cysteine 602/cysteine 665, and cysteine 659/cysteine 670. The 88-residue stretch at 446–533 (PPECGNGFVE…QCPANIHKLD (88 aa)) folds into the Disintegrin domain. The N-linked (GlcNAc...) asparagine glycan is linked to asparagine 521. Asparagine 609 and asparagine 636 each carry an N-linked (GlcNAc...) asparagine glycan. Asparagine 677 is a glycosylation site (N-linked (GlcNAc...) asparagine). The region spanning 677 to 713 (NFSTCLGSTNKICSGHGVCSNEVRCICDRFWTGEDCS) is the EGF-like domain. 3 disulfides stabilise this stretch: cysteine 681–cysteine 695, cysteine 689–cysteine 701, and cysteine 703–cysteine 712. The chain crosses the membrane as a helical span at residues 737–757 (IIIGAIAGTILVLALVLGITA). Residues 758–935 (WGYKNYRRER…QSARLWETSI (178 aa)) lie on the Cytoplasmic side of the membrane. A disordered region spans residues 850–935 (VSDVCENGRP…QSARLWETSI (86 aa)). Residues 859–870 (PRSNSWQGNVTS) are compositionally biased toward polar residues. Residues 871 to 882 (SRKKLRGKRFRP) show a composition bias toward basic residues. A compositionally biased stretch (low complexity) spans 891–906 (SPAKSPSSSTGSIASS).

The precursor is cleaved by a furin endopeptidase. In terms of tissue distribution, low levels in adult tissues. Not detected in developing embryos.

It is found in the cell membrane. Functionally, probable ligand for integrin in the brain. This is a non catalytic metalloprotease-like protein. This chain is Disintegrin and metalloproteinase domain-containing protein 22 (adam22), found in Xenopus laevis (African clawed frog).